Reading from the N-terminus, the 89-residue chain is uncharacterized protein (89 aa).

3 helical membrane-spanning segments follow: residues 5–27, 32–51, and 63–85; these read TLTE…GFTA, LYIG…KRLL, and LFFS…ALVA.

Its subcellular location is the cell membrane. This is an uncharacterized protein from Bacillus subtilis (strain 168).